The primary structure comprises 189 residues: UPF0312 protein VIBHAR_05924 (189 aa).

The first 22 residues, 1 to 22 (MKKSLFATGLAIAIALPFGANA), serve as a signal peptide directing secretion.

Belongs to the UPF0312 family. Type 1 subfamily.

The protein localises to the periplasm. The chain is UPF0312 protein VIBHAR_05924 from Vibrio campbellii (strain ATCC BAA-1116).